The primary structure comprises 358 residues: tRNA-specific 2-thiouridylase MnmA (358 aa).

ATP is bound by residues 8–15 (GMSGGVDS) and M34. The active-site Nucleophile is the C103. A disulfide bridge connects residues C103 and C199. ATP is bound at residue G127. The segment at 149-151 (KDQ) is interaction with tRNA. C199 serves as the catalytic Cysteine persulfide intermediate. Residues 305–306 (RY) form an interaction with tRNA region.

Belongs to the MnmA/TRMU family.

The protein resides in the cytoplasm. It catalyses the reaction S-sulfanyl-L-cysteinyl-[protein] + uridine(34) in tRNA + AH2 + ATP = 2-thiouridine(34) in tRNA + L-cysteinyl-[protein] + A + AMP + diphosphate + H(+). Its function is as follows. Catalyzes the 2-thiolation of uridine at the wobble position (U34) of tRNA, leading to the formation of s(2)U34. This chain is tRNA-specific 2-thiouridylase MnmA, found in Clostridium beijerinckii (strain ATCC 51743 / NCIMB 8052) (Clostridium acetobutylicum).